The sequence spans 430 residues: tRNA pseudouridine synthase Pus10 (430 aa).

Residue Asp-253 is the Nucleophile of the active site. Positions 320 and 392 each coordinate substrate.

The protein belongs to the pseudouridine synthase Pus10 family.

The enzyme catalyses uridine(54) in tRNA = pseudouridine(54) in tRNA. The catalysed reaction is uridine(55) in tRNA = pseudouridine(55) in tRNA. Functionally, responsible for synthesis of pseudouridine from uracil-54 and uracil-55 in the psi GC loop of transfer RNAs. The protein is tRNA pseudouridine synthase Pus10 of Ignisphaera aggregans (strain DSM 17230 / JCM 13409 / AQ1.S1).